The primary structure comprises 114 residues: T cell receptor alpha variable 24 (114 aa).

An N-terminal signal peptide occupies residues 1–22; it reads MEKNPLAAPLLILWFHLDCVSS. The Ig-like domain maps to 23–114; it reads ILNVEQSPQS…EDSATYLCAF (92 aa). Asparagine 42 carries N-linked (GlcNAc...) asparagine glycosylation. A disulfide bridge links cysteine 45 with cysteine 112.

In terms of assembly, alpha-beta TR is a heterodimer composed of an alpha and beta chain; disulfide-linked. The alpha-beta TR is associated with the transmembrane signaling CD3 coreceptor proteins to form the TR-CD3 (TcR or TCR). The assembly of alpha-beta TR heterodimers with CD3 occurs in the endoplasmic reticulum where a single alpha-beta TR heterodimer associates with one CD3D-CD3E heterodimer, one CD3G-CD3E heterodimer and one CD247 homodimer forming a stable octameric structure. CD3D-CD3E and CD3G-CD3E heterodimers preferentially associate with TR alpha and TR beta chains, respectively. The association of the CD247 homodimer is the last step of TcR assembly in the endoplasmic reticulum and is required for transport to the cell surface.

Its subcellular location is the cell membrane. In terms of biological role, v region of the variable domain of T cell receptor (TR) alpha chain that participates in the antigen recognition. Alpha-beta T cell receptors are antigen specific receptors which are essential to the immune response and are present on the cell surface of T lymphocytes. Recognize peptide-major histocompatibility (MH) (pMH) complexes that are displayed by antigen presenting cells (APC), a prerequisite for efficient T cell adaptive immunity against pathogens. Binding of alpha-beta TR to pMH complex initiates TR-CD3 clustering on the cell surface and intracellular activation of LCK that phosphorylates the ITAM motifs of CD3G, CD3D, CD3E and CD247 enabling the recruitment of ZAP70. In turn ZAP70 phosphorylates LAT, which recruits numerous signaling molecules to form the LAT signalosome. The LAT signalosome propagates signal branching to three major signaling pathways, the calcium, the mitogen-activated protein kinase (MAPK) kinase and the nuclear factor NF-kappa-B (NF-kB) pathways, leading to the mobilization of transcription factors that are critical for gene expression and essential for T cell growth and differentiation. The T cell repertoire is generated in the thymus, by V-(D)-J rearrangement. This repertoire is then shaped by intrathymic selection events to generate a peripheral T cell pool of self-MH restricted, non-autoaggressive T cells. Post-thymic interaction of alpha-beta TR with the pMH complexes shapes TR structural and functional avidity. The sequence is that of T cell receptor alpha variable 24 from Homo sapiens (Human).